Reading from the N-terminus, the 227-residue chain is Translation initiation factor 6 (227 aa).

It belongs to the eIF-6 family.

Its function is as follows. Binds to the 50S ribosomal subunit and prevents its association with the 30S ribosomal subunit to form the 70S initiation complex. This is Translation initiation factor 6 from Pyrococcus furiosus (strain ATCC 43587 / DSM 3638 / JCM 8422 / Vc1).